The following is a 235-amino-acid chain: Ubiquinone biosynthesis O-methyltransferase (235 aa).

The S-adenosyl-L-methionine site is built by R39, G59, D80, and M124.

The protein belongs to the methyltransferase superfamily. UbiG/COQ3 family.

The catalysed reaction is a 3-demethylubiquinol + S-adenosyl-L-methionine = a ubiquinol + S-adenosyl-L-homocysteine + H(+). It carries out the reaction a 3-(all-trans-polyprenyl)benzene-1,2-diol + S-adenosyl-L-methionine = a 2-methoxy-6-(all-trans-polyprenyl)phenol + S-adenosyl-L-homocysteine + H(+). Its pathway is cofactor biosynthesis; ubiquinone biosynthesis. O-methyltransferase that catalyzes the 2 O-methylation steps in the ubiquinone biosynthetic pathway. The protein is Ubiquinone biosynthesis O-methyltransferase of Vibrio campbellii (strain ATCC BAA-1116).